The chain runs to 336 residues: Hdr-like menaquinol oxidoreductase cytochrome b-like subunit (336 aa).

6 helical membrane passes run 4 to 24, 60 to 80, 102 to 122, 145 to 165, 184 to 204, and 232 to 252; these read ALYIFYALPYICFAIFVIGTI, IDSPSSKFWAFVRVLFVVFLF, WLWLFAILFHYSLLVIVIRHL, VAIVPPLLMTGVIALVALAFL, HLILFFMAVILVSGLLMRYII, and LHWLFLIHFTFVCITIAYIPF.

The protein resides in the cell membrane. Has menaquinol-oxidizing activity. The HmeC and HmeD subunits may together mediate electron transfer from menaquinol to an unidentified electron acceptor on the cytoplasmic side of the membrane. In Archaeoglobus profundus (strain DSM 5631 / JCM 9629 / NBRC 100127 / Av18), this protein is Hdr-like menaquinol oxidoreductase cytochrome b-like subunit (hmeC).